Consider the following 229-residue polypeptide: 2,3-bisphosphoglycerate-dependent phosphoglycerate mutase 2 (229 aa).

Substrate-binding positions include 12–19 (RHGESVAN), 25–26 (TG), arginine 65, 92–95 (ERHY), lysine 103, and 119–120 (RR). Histidine 13 (tele-phosphohistidine intermediate) is an active-site residue. Glutamate 92 acts as the Proton donor/acceptor in catalysis.

Belongs to the phosphoglycerate mutase family. BPG-dependent PGAM subfamily.

It carries out the reaction (2R)-2-phosphoglycerate = (2R)-3-phosphoglycerate. It functions in the pathway carbohydrate degradation; glycolysis; pyruvate from D-glyceraldehyde 3-phosphate: step 3/5. Functionally, catalyzes the interconversion of 2-phosphoglycerate and 3-phosphoglycerate. In Lactobacillus johnsonii (strain CNCM I-12250 / La1 / NCC 533), this protein is 2,3-bisphosphoglycerate-dependent phosphoglycerate mutase 2.